The chain runs to 371 residues: Dual-specificity RNA methyltransferase RlmN (371 aa).

The active-site Proton acceptor is the E114. The 233-residue stretch at 120–352 (EEDHFTLCVS…VMTRQSKGAD (233 aa)) folds into the Radical SAM core domain. Residues C127 and C357 are joined by a disulfide bond. [4Fe-4S] cluster-binding residues include C134, C138, and C141. Residues 183–184 (GE), S216, 238–240 (SLN), and N314 each bind S-adenosyl-L-methionine. C357 (S-methylcysteine intermediate) is an active-site residue.

Belongs to the radical SAM superfamily. RlmN family. [4Fe-4S] cluster serves as cofactor.

Its subcellular location is the cytoplasm. It carries out the reaction adenosine(2503) in 23S rRNA + 2 reduced [2Fe-2S]-[ferredoxin] + 2 S-adenosyl-L-methionine = 2-methyladenosine(2503) in 23S rRNA + 5'-deoxyadenosine + L-methionine + 2 oxidized [2Fe-2S]-[ferredoxin] + S-adenosyl-L-homocysteine. The catalysed reaction is adenosine(37) in tRNA + 2 reduced [2Fe-2S]-[ferredoxin] + 2 S-adenosyl-L-methionine = 2-methyladenosine(37) in tRNA + 5'-deoxyadenosine + L-methionine + 2 oxidized [2Fe-2S]-[ferredoxin] + S-adenosyl-L-homocysteine. Specifically methylates position 2 of adenine 2503 in 23S rRNA and position 2 of adenine 37 in tRNAs. m2A2503 modification seems to play a crucial role in the proofreading step occurring at the peptidyl transferase center and thus would serve to optimize ribosomal fidelity. In Desulfosudis oleivorans (strain DSM 6200 / JCM 39069 / Hxd3) (Desulfococcus oleovorans), this protein is Dual-specificity RNA methyltransferase RlmN.